The chain runs to 20 residues: 39 kDa major outer membrane protein (20 aa).

The protein localises to the cell outer membrane. This chain is 39 kDa major outer membrane protein, found in Aggregatibacter actinomycetemcomitans (Actinobacillus actinomycetemcomitans).